We begin with the raw amino-acid sequence, 677 residues long: Methionine--tRNA ligase (677 aa).

A 'HIGH' region motif is present at residues 15 to 25 (PYANGSIHLGH). Residues C146, C149, C159, and C162 each coordinate Zn(2+). Residues 333–337 (KMSKS) carry the 'KMSKS' region motif. K336 is a binding site for ATP. The region spanning 576 to 677 (DFAKIDLRVA…EGAKPGMRVK (102 aa)) is the tRNA-binding domain.

Belongs to the class-I aminoacyl-tRNA synthetase family. MetG type 1 subfamily. Homodimer. Requires Zn(2+) as cofactor.

Its subcellular location is the cytoplasm. The catalysed reaction is tRNA(Met) + L-methionine + ATP = L-methionyl-tRNA(Met) + AMP + diphosphate. Is required not only for elongation of protein synthesis but also for the initiation of all mRNA translation through initiator tRNA(fMet) aminoacylation. In Aeromonas hydrophila subsp. hydrophila (strain ATCC 7966 / DSM 30187 / BCRC 13018 / CCUG 14551 / JCM 1027 / KCTC 2358 / NCIMB 9240 / NCTC 8049), this protein is Methionine--tRNA ligase.